The sequence spans 153 residues: UPF0756 membrane protein lmo1568 (153 aa).

4 consecutive transmembrane segments (helical) span residues 6 to 26 (MLFL…SLII), 54 to 74 (WGVT…QIGF), 80 to 100 (SFKS…SILA), and 117 to 137 (LVFG…GPVI).

The protein belongs to the UPF0756 family.

The protein localises to the cell membrane. This Listeria monocytogenes serovar 1/2a (strain ATCC BAA-679 / EGD-e) protein is UPF0756 membrane protein lmo1568.